We begin with the raw amino-acid sequence, 466 residues long: Paraneoplastic antigen Ma3 homolog (466 aa).

Residues 379-408 (RPYQGSRRRRHRRRGQHRKGGVPRDDSQGT) form a disordered region. Positions 384 to 399 (SRRRRHRRRGQHRKGG) are enriched in basic residues. The segment at 415-432 (TFCYSCGEDGHIRVHCFN) adopts a CCHC-type zinc-finger fold. Residues 441 to 466 (QKRQAAMEKGNRSWAWEKSHPKPKTK) are disordered. Basic and acidic residues predominate over residues 445-460 (AAMEKGNRSWAWEKSH).

Belongs to the PNMA family. In terms of tissue distribution, expressed in the cerebrum and cerebellum.

It localises to the nucleus. It is found in the nucleolus. This Mus musculus (Mouse) protein is Paraneoplastic antigen Ma3 homolog (Pnma3).